Here is a 317-residue protein sequence, read N- to C-terminus: L-lactate dehydrogenase 2 (317 aa).

Residues V16, D37, K42, Y68, and G82 to A83 each bind NAD(+). Residues Q85 and R91 each contribute to the substrate site. NAD(+)-binding positions include T104, A121–N123, and T146. Residue N123–D126 participates in substrate binding. Position 151–154 (D151–R154) interacts with substrate. Residues R156 and H171 each coordinate beta-D-fructose 1,6-bisphosphate. H178 acts as the Proton acceptor in catalysis. Y223 carries the phosphotyrosine modification. T232 contacts substrate.

This sequence belongs to the LDH/MDH superfamily. LDH family. In terms of assembly, homotetramer.

It localises to the cytoplasm. It catalyses the reaction (S)-lactate + NAD(+) = pyruvate + NADH + H(+). It functions in the pathway fermentation; pyruvate fermentation to lactate; (S)-lactate from pyruvate: step 1/1. Its activity is regulated as follows. Allosterically activated by fructose 1,6-bisphosphate (FBP). Its function is as follows. Catalyzes the conversion of lactate to pyruvate. The sequence is that of L-lactate dehydrogenase 2 from Enterococcus faecalis (strain ATCC 700802 / V583).